The chain runs to 174 residues: ATP synthase subunit delta (174 aa).

Belongs to the ATPase delta chain family. As to quaternary structure, F-type ATPases have 2 components, F(1) - the catalytic core - and F(0) - the membrane proton channel. F(1) has five subunits: alpha(3), beta(3), gamma(1), delta(1), epsilon(1). F(0) has three main subunits: a(1), b(2) and c(10-14). The alpha and beta chains form an alternating ring which encloses part of the gamma chain. F(1) is attached to F(0) by a central stalk formed by the gamma and epsilon chains, while a peripheral stalk is formed by the delta and b chains.

The protein localises to the cell inner membrane. Functionally, f(1)F(0) ATP synthase produces ATP from ADP in the presence of a proton or sodium gradient. F-type ATPases consist of two structural domains, F(1) containing the extramembraneous catalytic core and F(0) containing the membrane proton channel, linked together by a central stalk and a peripheral stalk. During catalysis, ATP synthesis in the catalytic domain of F(1) is coupled via a rotary mechanism of the central stalk subunits to proton translocation. In terms of biological role, this protein is part of the stalk that links CF(0) to CF(1). It either transmits conformational changes from CF(0) to CF(1) or is implicated in proton conduction. In Helicobacter hepaticus (strain ATCC 51449 / 3B1), this protein is ATP synthase subunit delta.